The sequence spans 252 residues: Transmembrane ascorbate-dependent reductase CYB561 (252 aa).

Residue Met-1 is modified to N-acetylmethionine. Residues 1–17 (MEGPASPAPAPGALPYY) are Cytoplasmic-facing. Residues 18 to 38 (VAFSQLLGLTVVAMTGAWLGM) form a helical membrane-spanning segment. The Cytochrome b561 domain occupies 20 to 221 (FSQLLGLTVV…FATVVLYILT (202 aa)). Over 39 to 52 (YRGGIAWESALQFN) the chain is Vesicular. A helical transmembrane segment spans residues 53 to 73 (VHPLCMVIGLVFLQGDALLVY). Residues His-54, Arg-74, and Lys-81 each contribute to the heme b site. At 74-86 (RVFRNEAKRTTKV) the chain is on the cytoplasmic side. L-ascorbate is bound by residues Lys-81 and Lys-85. A helical membrane pass occupies residues 87–107 (LHGLLHVFAFVIALVGLVAVF). Heme b contacts are provided by residues His-88, 117-120 (DLYS), and His-122. The Vesicular portion of the chain corresponds to 108 to 125 (EHHRKKGYADLYSLHSWC). A helical membrane pass occupies residues 126–146 (GILVFALFFAQWLVGFSFFLF). The Cytoplasmic segment spans residues 147–159 (PGASFSLRSRYRP). Arg-154 serves as a coordination point for L-ascorbate. The chain crosses the membrane as a helical span at residues 160 to 180 (QHVFFGAAIFLLSVATALLGL). Residues His-161 and Glu-182 each contribute to the heme b site. At 181–199 (KEALLFELGTKYSTFEPEG) the chain is on the vesicular side. The helical transmembrane segment at 200-220 (VLANVLGLLLAAFATVVLYIL) threads the bilayer. Residues 221–252 (TRADWKRPLQAEEQALSMDFKTLTEGDSPSSQ) are Cytoplasmic-facing. Lys-226 is a binding site for heme b. Ser-248 and Ser-250 each carry phosphoserine.

Heme b is required as a cofactor.

The protein resides in the cytoplasmic vesicle. The protein localises to the secretory vesicle. Its subcellular location is the chromaffin granule membrane. The enzyme catalyses monodehydro-L-ascorbate radical(out) + L-ascorbate(in) = monodehydro-L-ascorbate radical(in) + L-ascorbate(out). Transmembrane reductase that uses ascorbate as an electron donor in the cytoplasm and transfers electrons across membranes to reduce monodehydro-L-ascorbate radical in the lumen of secretory vesicles. It is therefore involved the regeneration and homeostasis within secretory vesicles of ascorbate which in turn provides reducing equivalents needed to support the activity of intravesicular enzymes. The sequence is that of Transmembrane ascorbate-dependent reductase CYB561 (CYB561) from Ovis aries (Sheep).